Consider the following 905-residue polypeptide: Protein translocase subunit SecA (905 aa).

ATP-binding positions include Gln89, 107–111 (GEGKT), and Asp502. Residues Cys889, Cys891, Cys900, and His901 each contribute to the Zn(2+) site.

Belongs to the SecA family. In terms of assembly, monomer and homodimer. Part of the essential Sec protein translocation apparatus which comprises SecA, SecYEG and auxiliary proteins SecDF-YajC and YidC. Zn(2+) serves as cofactor.

Its subcellular location is the cell inner membrane. It is found in the cytoplasm. It catalyses the reaction ATP + H2O + cellular proteinSide 1 = ADP + phosphate + cellular proteinSide 2.. Part of the Sec protein translocase complex. Interacts with the SecYEG preprotein conducting channel. Has a central role in coupling the hydrolysis of ATP to the transfer of proteins into and across the cell membrane, serving both as a receptor for the preprotein-SecB complex and as an ATP-driven molecular motor driving the stepwise translocation of polypeptide chains across the membrane. The polypeptide is Protein translocase subunit SecA (Bartonella tribocorum (strain CIP 105476 / IBS 506)).